A 224-amino-acid polypeptide reads, in one-letter code: Cytidylate kinase (224 aa).

9–17 (GPSGSGKGT) contacts ATP.

The protein belongs to the cytidylate kinase family. Type 1 subfamily.

It is found in the cytoplasm. The catalysed reaction is CMP + ATP = CDP + ADP. It carries out the reaction dCMP + ATP = dCDP + ADP. The chain is Cytidylate kinase from Saccharophagus degradans (strain 2-40 / ATCC 43961 / DSM 17024).